The following is a 70-amino-acid chain: Conotoxin Im23.3 (70 aa).

The signal sequence occupies residues 1 to 22; sequence MIMRMTLTLFVLVVMTAASASG. The propeptide occupies 23–28; that stretch reads DALTEA. 3 cysteine pairs are disulfide-bonded: Cys-34/Cys-41, Cys-45/Cys-53, and Cys-54/Cys-69.

The protein belongs to the conotoxin K superfamily. As to expression, expressed by the venom duct.

The protein resides in the secreted. Functionally, neurotoxin that induces excitatory symptoms in mice following intracranial administration. No symptoms are observed after intraperitoneal and intravenous (tail vein) injections. This chain is Conotoxin Im23.3, found in Conus imperialis (Imperial cone).